The primary structure comprises 320 residues: MSVGFIGAGQLACALARGFTAAGILSAHKIIASSPEMDLPTVSALRKMGVNLTRSNKETVRHSDVLFLAVKPHIIPFILDEIGADVQARHIVVSCAAGVTISSVEKKLMAFQPAPKVIRCMTNTPVLVREGATVYATGTHALVEDGQLLEQLMSSVGFCTEVEEDLIDAVTGLSGSGPAYAFMALDALADGGVKMGLPRRLAVRLGAQALLGAAKMLLDSEQHPGQLKDNVCSPGGATIHALHFLESGGFRSLLINAVEASCIRTRELQSMADQEKISPAALKKTLLDRVKLESPTVTTLTPTSSGKLLTRSPVPGGKKD.

Serine 2 bears the N-acetylserine mark. NADP(+) contacts are provided by residues 6–11 (IGAGQL) and serine 34. NADPH is bound by residues alanine 8, glutamine 10, leucine 11, serine 34, glutamate 36, asparagine 56, valine 70, lysine 71, and alanine 97. NADP(+) is bound by residues asparagine 56, 69 to 72 (AVKP), and 95 to 97 (CAA). Glutamate 164 provides a ligand contact to L-proline. NADPH is bound at residue asparagine 230. L-proline-binding residues include alanine 237 and threonine 238. The interval 298-320 (TTLTPTSSGKLLTRSPVPGGKKD) is disordered. Serine 304 carries the post-translational modification Phosphoserine.

The protein belongs to the pyrroline-5-carboxylate reductase family. As to quaternary structure, homodecamer; composed of 5 homodimers. Interacts with LTO1.

Its subcellular location is the cytoplasm. It localises to the mitochondrion. It catalyses the reaction L-proline + NADP(+) = (S)-1-pyrroline-5-carboxylate + NADPH + 2 H(+). It carries out the reaction L-proline + NAD(+) = (S)-1-pyrroline-5-carboxylate + NADH + 2 H(+). It participates in amino-acid biosynthesis; L-proline biosynthesis; L-proline from L-glutamate 5-semialdehyde: step 1/1. Functionally, oxidoreductase that catalyzes the last step in proline biosynthesis, which corresponds to the reduction of pyrroline-5-carboxylate to L-proline using NAD(P)H. At physiologic concentrations, has higher specific activity in the presence of NADH. Involved in cellular response to oxidative stress. In some cell types, such as erythrocytes, its primary function may be the generation of NADP(+). This chain is Pyrroline-5-carboxylate reductase 2 (PYCR2), found in Bos taurus (Bovine).